A 245-amino-acid chain; its full sequence is UDP-N-acetyl-D-mannosaminuronic acid transferase (245 aa).

It belongs to the glycosyltransferase 26 family.

It carries out the reaction UDP-N-acetyl-alpha-D-mannosaminouronate + N-acetyl-alpha-D-glucosaminyl-di-trans,octa-cis-undecaprenyl diphosphate = beta-D-ManNAcA-(1-&gt;4)-alpha-D-GlcNAc-di-trans,octa-cis-undecaprenyl diphosphate + UDP + H(+). It participates in bacterial outer membrane biogenesis; enterobacterial common antigen biosynthesis. Catalyzes the synthesis of Und-PP-GlcNAc-ManNAcA (Lipid II), the second lipid-linked intermediate involved in enterobacterial common antigen (ECA) synthesis. This is UDP-N-acetyl-D-mannosaminuronic acid transferase from Proteus mirabilis (strain HI4320).